Reading from the N-terminus, the 274-residue chain is Imidazole glycerol phosphate synthase subunit HisF (274 aa).

Catalysis depends on residues Asp-11 and Asp-134.

This sequence belongs to the HisA/HisF family. In terms of assembly, heterodimer of HisH and HisF.

The protein localises to the cytoplasm. It carries out the reaction 5-[(5-phospho-1-deoxy-D-ribulos-1-ylimino)methylamino]-1-(5-phospho-beta-D-ribosyl)imidazole-4-carboxamide + L-glutamine = D-erythro-1-(imidazol-4-yl)glycerol 3-phosphate + 5-amino-1-(5-phospho-beta-D-ribosyl)imidazole-4-carboxamide + L-glutamate + H(+). It functions in the pathway amino-acid biosynthesis; L-histidine biosynthesis; L-histidine from 5-phospho-alpha-D-ribose 1-diphosphate: step 5/9. IGPS catalyzes the conversion of PRFAR and glutamine to IGP, AICAR and glutamate. The HisF subunit catalyzes the cyclization activity that produces IGP and AICAR from PRFAR using the ammonia provided by the HisH subunit. The sequence is that of Imidazole glycerol phosphate synthase subunit HisF from Methanobrevibacter smithii (strain ATCC 35061 / DSM 861 / OCM 144 / PS).